A 922-amino-acid polypeptide reads, in one-letter code: Lysine-specific demethylase 7A (922 aa).

The PHD-type zinc finger occupies 6–57 (PVYCVCRQPYDVSRFMIECDICKDWFHSSCVKVEEHQAADIDLYHCPNCEVL). One can recognise a JmjC domain in the interval 199–355 (FSDTKMADLV…MQLRCYEMEK (157 aa)). Residue T248 coordinates substrate. Fe cation contacts are provided by H251 and D253. K268 lines the substrate pocket. H323 lines the Fe cation pocket. 5 disordered regions span residues 445–490 (EEEG…TKTP), 565–607 (RSLY…TQKP), 622–711 (GSSE…EQEA), 754–773 (GKEH…HHVK), and 872–902 (LHPT…MATA). Residues 473–483 (HHSGRKARRLR) are compositionally biased toward basic residues. Positions 648 to 666 (ESESSGDDDDEEEEEEEER) are enriched in acidic residues. Composition is skewed to basic and acidic residues over residues 667-683 (QEPI…RRLP) and 691-701 (PDHDSPQKREC).

Belongs to the JHDM1 histone demethylase family. JHDM1D subfamily. Requires Fe(2+) as cofactor.

The protein resides in the nucleus. Its function is as follows. Histone demethylase required for brain development. Specifically demethylates dimethylated 'Lys-9' and 'Lys-27' (H3K9me2 and H3K27me2, respectively) of histone H3 and monomethylated histone H4 'Lys-20' residue (H4K20Me1), thereby playing a central role in histone code. This chain is Lysine-specific demethylase 7A (kdm7a), found in Xenopus tropicalis (Western clawed frog).